Here is a 400-residue protein sequence, read N- to C-terminus: Phosphoglycerate kinase (400 aa).

Residues 21–23, Arg37, 60–63, Arg121, and Arg154 each bind substrate; these read DFN and HLGR. ATP is bound by residues Lys204, Glu326, and 355 to 358; that span reads GGDS.

Belongs to the phosphoglycerate kinase family. Monomer.

It localises to the cytoplasm. The enzyme catalyses (2R)-3-phosphoglycerate + ATP = (2R)-3-phospho-glyceroyl phosphate + ADP. It functions in the pathway carbohydrate degradation; glycolysis; pyruvate from D-glyceraldehyde 3-phosphate: step 2/5. The polypeptide is Phosphoglycerate kinase (Chloroflexus aurantiacus (strain ATCC 29366 / DSM 635 / J-10-fl)).